Here is a 336-residue protein sequence, read N- to C-terminus: Dihydroorotate dehydrogenase (quinone) (336 aa).

FMN is bound by residues 62 to 66 (AGLDK) and threonine 86. Lysine 66 is a binding site for substrate. 111-115 (NRMGF) is a binding site for substrate. 2 residues coordinate FMN: asparagine 139 and asparagine 172. Substrate is bound at residue asparagine 172. Serine 175 serves as the catalytic Nucleophile. Asparagine 177 is a substrate binding site. FMN is bound by residues lysine 217 and threonine 245. 246-247 (NT) contributes to the substrate binding site. FMN is bound by residues glycine 268, glycine 297, and 318–319 (YS).

This sequence belongs to the dihydroorotate dehydrogenase family. Type 2 subfamily. As to quaternary structure, monomer. FMN is required as a cofactor.

The protein localises to the cell membrane. It carries out the reaction (S)-dihydroorotate + a quinone = orotate + a quinol. The protein operates within pyrimidine metabolism; UMP biosynthesis via de novo pathway; orotate from (S)-dihydroorotate (quinone route): step 1/1. Catalyzes the conversion of dihydroorotate to orotate with quinone as electron acceptor. This is Dihydroorotate dehydrogenase (quinone) from Aliivibrio fischeri (strain MJ11) (Vibrio fischeri).